Consider the following 327-residue polypeptide: Alkanal monooxygenase beta chain (327 aa).

The protein belongs to the bacterial luciferase oxidoreductase family. In terms of assembly, heterodimer of an alpha and a beta chain.

It catalyses the reaction a long-chain fatty aldehyde + FMNH2 + O2 = a long-chain fatty acid + hnu + FMN + H2O + 2 H(+). Its function is as follows. Light-emitting reaction in luminous bacteria. The specific role of the beta subunit is unknown, but it is absolutely required for bioluminescence activity. The sequence is that of Alkanal monooxygenase beta chain (luxB) from Photorhabdus luminescens (Xenorhabdus luminescens).